A 279-amino-acid chain; its full sequence is Thymidylate synthase (279 aa).

141-142 is a dUMP binding site; sequence RR. The active-site Nucleophile is the Cys-161. DUMP contacts are provided by residues 181 to 184, Asn-192, and 222 to 224; these read RSND and HIY. A (6R)-5,10-methylene-5,6,7,8-tetrahydrofolate-binding site is contributed by Asp-184. Ala-278 serves as a coordination point for (6R)-5,10-methylene-5,6,7,8-tetrahydrofolate.

It belongs to the thymidylate synthase family. Bacterial-type ThyA subfamily. As to quaternary structure, homodimer.

Its subcellular location is the cytoplasm. The catalysed reaction is dUMP + (6R)-5,10-methylene-5,6,7,8-tetrahydrofolate = 7,8-dihydrofolate + dTMP. It participates in pyrimidine metabolism; dTTP biosynthesis. Its function is as follows. Catalyzes the reductive methylation of 2'-deoxyuridine-5'-monophosphate (dUMP) to 2'-deoxythymidine-5'-monophosphate (dTMP) while utilizing 5,10-methylenetetrahydrofolate (mTHF) as the methyl donor and reductant in the reaction, yielding dihydrofolate (DHF) as a by-product. This enzymatic reaction provides an intracellular de novo source of dTMP, an essential precursor for DNA biosynthesis. The sequence is that of Thymidylate synthase from Bacillus licheniformis (strain ATCC 14580 / DSM 13 / JCM 2505 / CCUG 7422 / NBRC 12200 / NCIMB 9375 / NCTC 10341 / NRRL NRS-1264 / Gibson 46).